We begin with the raw amino-acid sequence, 185 residues long: dTTP/UTP pyrophosphatase (185 aa).

The Proton acceptor role is filled by D64.

The protein belongs to the Maf family. YhdE subfamily. Requires a divalent metal cation as cofactor.

It is found in the cytoplasm. The catalysed reaction is dTTP + H2O = dTMP + diphosphate + H(+). It carries out the reaction UTP + H2O = UMP + diphosphate + H(+). Functionally, nucleoside triphosphate pyrophosphatase that hydrolyzes dTTP and UTP. May have a dual role in cell division arrest and in preventing the incorporation of modified nucleotides into cellular nucleic acids. This is dTTP/UTP pyrophosphatase from Leptospira borgpetersenii serovar Hardjo-bovis (strain JB197).